Here is a 320-residue protein sequence, read N- to C-terminus: Acetyl-coenzyme A carboxylase carboxyl transferase subunit beta (320 aa).

Residues 25–294 (VWTKCDSCGQ…AKDEDELLGE (270 aa)) enclose the CoA carboxyltransferase N-terminal domain. The Zn(2+) site is built by C29, C32, C48, and C51. Residues 29–51 (CDSCGQVLYRAELERNLEVCPKC) form a C4-type zinc finger. The segment covering 295–310 (EMIADDIESSDNEPEI) has biased composition (acidic residues). Residues 295–320 (EMIADDIESSDNEPEINIETNKKEDV) are disordered.

The protein belongs to the AccD/PCCB family. Acetyl-CoA carboxylase is a heterohexamer composed of biotin carboxyl carrier protein (AccB), biotin carboxylase (AccC) and two subunits each of ACCase subunit alpha (AccA) and ACCase subunit beta (AccD). The cofactor is Zn(2+).

Its subcellular location is the cytoplasm. The catalysed reaction is N(6)-carboxybiotinyl-L-lysyl-[protein] + acetyl-CoA = N(6)-biotinyl-L-lysyl-[protein] + malonyl-CoA. Its pathway is lipid metabolism; malonyl-CoA biosynthesis; malonyl-CoA from acetyl-CoA: step 1/1. Component of the acetyl coenzyme A carboxylase (ACC) complex. Biotin carboxylase (BC) catalyzes the carboxylation of biotin on its carrier protein (BCCP) and then the CO(2) group is transferred by the transcarboxylase to acetyl-CoA to form malonyl-CoA. The sequence is that of Acetyl-coenzyme A carboxylase carboxyl transferase subunit beta from Proteus mirabilis (strain HI4320).